A 109-amino-acid chain; its full sequence is Spermidine export protein MdtI (109 aa).

The next 4 membrane-spanning stretches (helical) occupy residues 6-26, 36-56, 64-84, and 88-108; these read FYPI…NILL, WLGI…AQAV, AYAM…WILF, and LNYK…MIKL.

It belongs to the drug/metabolite transporter (DMT) superfamily. Small multidrug resistance (SMR) (TC 2.A.7.1) family. MdtI subfamily. Forms a complex with MdtJ.

The protein resides in the cell inner membrane. Functionally, catalyzes the excretion of spermidine. The polypeptide is Spermidine export protein MdtI (Yersinia pseudotuberculosis serotype I (strain IP32953)).